Here is a 458-residue protein sequence, read N- to C-terminus: ATP synthase subunit beta (458 aa).

Position 148–155 (148–155) interacts with ATP; the sequence is GGAGVGKT.

This sequence belongs to the ATPase alpha/beta chains family. F-type ATPases have 2 components, CF(1) - the catalytic core - and CF(0) - the membrane proton channel. CF(1) has five subunits: alpha(3), beta(3), gamma(1), delta(1), epsilon(1). CF(0) has three main subunits: a(1), b(2) and c(9-12). The alpha and beta chains form an alternating ring which encloses part of the gamma chain. CF(1) is attached to CF(0) by a central stalk formed by the gamma and epsilon chains, while a peripheral stalk is formed by the delta and b chains.

It localises to the cell inner membrane. It catalyses the reaction ATP + H2O + 4 H(+)(in) = ADP + phosphate + 5 H(+)(out). Produces ATP from ADP in the presence of a proton gradient across the membrane. The catalytic sites are hosted primarily by the beta subunits. This chain is ATP synthase subunit beta, found in Shewanella woodyi (strain ATCC 51908 / MS32).